A 115-amino-acid chain; its full sequence is Large ribosomal subunit protein uL22c (115 aa).

Belongs to the universal ribosomal protein uL22 family. As to quaternary structure, part of the 50S ribosomal subunit.

The protein resides in the plastid. It is found in the chloroplast. In terms of biological role, this protein binds specifically to 23S rRNA. Functionally, the globular domain of the protein is located near the polypeptide exit tunnel on the outside of the subunit, while an extended beta-hairpin is found that lines the wall of the exit tunnel in the center of the 70S ribosome. The polypeptide is Large ribosomal subunit protein uL22c (rpl22) (Phaeodactylum tricornutum (strain CCAP 1055/1)).